Reading from the N-terminus, the 350-residue chain is Probable aldo-keto reductase 1 (350 aa).

The Proton donor role is filled by tyrosine 67. Histidine 135 serves as a coordination point for substrate. 214–224 (SPLGKGFFSSG) is a binding site for NADP(+).

It belongs to the aldo/keto reductase family.

The sequence is that of Probable aldo-keto reductase 1 from Oryza sativa subsp. indica (Rice).